Here is a 709-residue protein sequence, read N- to C-terminus: Protein white (709 aa).

The tract at residues 1–35 (MTINTDDQYADGESKTTISSNRRYSTSSFQDQSME) is disordered. Over residues 15-32 (KTTISSNRRYSTSSFQDQ) the composition is skewed to polar residues. An ABC transporter domain is found at 103 to 348 (FTRQRLVKDF…SQLGIPCPPN (246 aa)). Residues 136 to 143 (GSSGAGKT) and 292 to 299 (GMAMKGKT) each bind ATP. The chain crosses the membrane as a helical span at residues 457 to 475 (LLQTAMVASLIGSIYFGQV). Asparagine 485 carries N-linked (GlcNAc...) asparagine glycosylation. Helical transmembrane passes span 487-507 (SLFLFLTNMTFQNVFAVINVF), 537-555 (LPLFIAVPFVFTSITYPMI), 564-585 (YLTTLFIVTLVANVSTSFGYLI), and 598-616 (VGPPVVIPFLIFGGFFLNS). An N-linked (GlcNAc...) asparagine glycan is attached at asparagine 658. A helical transmembrane segment spans residues 681-700 (LDIGCLFALIVLFRLGALFC).

The protein belongs to the ABC transporter superfamily. ABCG family. Eye pigment precursor importer (TC 3.A.1.204) subfamily.

It is found in the membrane. In terms of biological role, may be part of a membrane-spanning permease system necessary for the transport of pigment precursors into pigment cells responsible for eye color. The polypeptide is Protein white (W) (Anopheles albimanus (New world malaria mosquito)).